Reading from the N-terminus, the 633-residue chain is Extracellular metalloproteinase 3 (633 aa).

The first 18 residues, 1-18 (MHGLLLAGLLALPMNVLA), serve as a signal peptide directing secretion. The propeptide occupies 19–246 (YPAEQHASNV…VHNVVDYVAS (228 aa)). An N-linked (GlcNAc...) asparagine glycan is attached at Asn410. His429 is a Zn(2+) binding site. The active site involves Glu430. His433 is a binding site for Zn(2+). 2 N-linked (GlcNAc...) asparagine glycosylation sites follow: Asn480 and Asn622.

The protein belongs to the peptidase M36 family. It depends on Zn(2+) as a cofactor.

The protein localises to the secreted. In terms of biological role, secreted metalloproteinase probably acting as a virulence factor. This chain is Extracellular metalloproteinase 3 (MEP3), found in Trichophyton rubrum (Athlete's foot fungus).